We begin with the raw amino-acid sequence, 734 residues long: Photosystem I P700 chlorophyll a apoprotein A2 (734 aa).

A run of 8 helical transmembrane segments spans residues 46–69, 135–158, 175–199, 273–291, 330–353, 369–395, 417–439, and 517–535; these read IFAS…FHVA, LYTG…LHLQ, LNHH…HVAI, IAHH…GHMY, LHFQ…QHMY, AALY…IFLI, AIIS…LYVH, and FLVH…LILV. The [4Fe-4S] cluster site is built by C559 and C568. The next 2 helical transmembrane spans lie at 575–596 and 643–665; these read AFYS…YWHW and LSVW…MFLI. Chlorophyll a-binding residues include H654, M662, and Y670. Phylloquinone is bound at residue W671. Residues 707–727 traverse the membrane as a helical segment; the sequence is LVGLAHFSVGYIFTYAAFLIA.

It belongs to the PsaA/PsaB family. In terms of assembly, the PsaA/B heterodimer binds the P700 chlorophyll special pair and subsequent electron acceptors. PSI consists of a core antenna complex that captures photons, and an electron transfer chain that converts photonic excitation into a charge separation. The eukaryotic PSI reaction center is composed of at least 11 subunits. It depends on P700 is a chlorophyll a/chlorophyll a' dimer, A0 is one or more chlorophyll a, A1 is one or both phylloquinones and FX is a shared 4Fe-4S iron-sulfur center. as a cofactor.

It localises to the plastid. The protein resides in the chloroplast thylakoid membrane. The catalysed reaction is reduced [plastocyanin] + hnu + oxidized [2Fe-2S]-[ferredoxin] = oxidized [plastocyanin] + reduced [2Fe-2S]-[ferredoxin]. In terms of biological role, psaA and PsaB bind P700, the primary electron donor of photosystem I (PSI), as well as the electron acceptors A0, A1 and FX. PSI is a plastocyanin-ferredoxin oxidoreductase, converting photonic excitation into a charge separation, which transfers an electron from the donor P700 chlorophyll pair to the spectroscopically characterized acceptors A0, A1, FX, FA and FB in turn. Oxidized P700 is reduced on the lumenal side of the thylakoid membrane by plastocyanin. The chain is Photosystem I P700 chlorophyll a apoprotein A2 from Huperzia lucidula (Shining clubmoss).